Reading from the N-terminus, the 671-residue chain is DNA ligase (671 aa).

NAD(+)-binding positions include 32 to 36 (DAEYD), 81 to 82 (SL), and glutamate 113. Residue lysine 115 is the N6-AMP-lysine intermediate of the active site. NAD(+) contacts are provided by arginine 136, glutamate 173, lysine 290, and lysine 314. Positions 408, 411, 426, and 432 each coordinate Zn(2+). Positions 593 to 671 (EIDSPFAGKT…EAEMLRLLGS (79 aa)) constitute a BRCT domain.

It belongs to the NAD-dependent DNA ligase family. LigA subfamily. Mg(2+) is required as a cofactor. Mn(2+) serves as cofactor.

The enzyme catalyses NAD(+) + (deoxyribonucleotide)n-3'-hydroxyl + 5'-phospho-(deoxyribonucleotide)m = (deoxyribonucleotide)n+m + AMP + beta-nicotinamide D-nucleotide.. DNA ligase that catalyzes the formation of phosphodiester linkages between 5'-phosphoryl and 3'-hydroxyl groups in double-stranded DNA using NAD as a coenzyme and as the energy source for the reaction. It is essential for DNA replication and repair of damaged DNA. The polypeptide is DNA ligase (Escherichia coli O7:K1 (strain IAI39 / ExPEC)).